The sequence spans 422 residues: MAM and fibronectin type III domain-containing protein 1 (422 aa).

The region spanning 1 to 75 is the MAM domain; it reads KFYYHMYGAT…VSLMEGICAG (75 aa). Fibronectin type-III domains are found at residues 2-74, 196-286, and 291-386; these read FYYH…GICA, PGWN…QART, and PSRA…YIVT.

As to expression, component of the acid-insoluble and acid-soluble organic matrix of the aragonitic skeleton (at protein level).

It localises to the secreted. In Acropora millepora (Staghorn coral), this protein is MAM and fibronectin type III domain-containing protein 1.